Consider the following 294-residue polypeptide: Pyrroline-5-carboxylate reductase (294 aa).

This sequence belongs to the pyrroline-5-carboxylate reductase family.

It localises to the cytoplasm. The enzyme catalyses L-proline + NADP(+) = (S)-1-pyrroline-5-carboxylate + NADPH + 2 H(+). It carries out the reaction L-proline + NAD(+) = (S)-1-pyrroline-5-carboxylate + NADH + 2 H(+). Its pathway is amino-acid biosynthesis; L-proline biosynthesis; L-proline from L-glutamate 5-semialdehyde: step 1/1. Catalyzes the reduction of 1-pyrroline-5-carboxylate (PCA) to L-proline. This chain is Pyrroline-5-carboxylate reductase, found in Mycobacterium leprae (strain TN).